Consider the following 67-residue polypeptide: Protein AaeX (67 aa).

Transmembrane regions (helical) follow at residues 9–29 and 47–67; these read IFGLSFPPVFFELLVPLALFF and PALFNTALYCCLFYLISCLFV.

This sequence belongs to the AaeX family.

Its subcellular location is the cell membrane. This chain is Protein AaeX, found in Serratia marcescens.